The primary structure comprises 467 residues: MRTKIKSLRGTTPEVRALIGHDITLKGWVRTVRNQKTFTFIEINDGSTLSNFQIIATPDIAGYDQLINQLSTGVSVSAIGTIVESPGKEQNLEMQATAITIIGKCDPEVYLLQKKRHTFEFLRSIAHLRPRTNTIGAVTRVRNALAFATHQFFQKRGFLYIHTPIITGSDCEGAGKMFQVTTLDQNNPARTPEGRVDYTQDFFGKPTYLTVSGQLNGEIYACALSDVYTFGPTFRAENSNTSRHLAEFWMIEPEMAFADLNDNMDCAEDYLKYILKYVLDNCQEDMEFFNKHVATDLISRLEHVINTSFERASYTYAVRILEKADKKFEYPVKWGLDLQSEHERFLAEEFFGKPVILTDYPKDIKAFYMRTNEDNKTVAAMDVLVPKVGEIIGGSQREERLSVLESKLKEFNLPAEEYWWYLELRKFGSVPHSGFGAGFERLVQFTTGMENIRDVIPFPRHPGKADF.

It belongs to the class-II aminoacyl-tRNA synthetase family. In terms of assembly, homodimer.

It localises to the cytoplasm. It carries out the reaction tRNA(Asn) + L-asparagine + ATP = L-asparaginyl-tRNA(Asn) + AMP + diphosphate + H(+). This chain is Asparagine--tRNA ligase, found in Protochlamydia amoebophila (strain UWE25).